The chain runs to 247 residues: 23S rRNA (guanosine-2'-O-)-methyltransferase RlmB (247 aa).

Residues Gly197, Ile217, and Leu226 each contribute to the S-adenosyl-L-methionine site.

Belongs to the class IV-like SAM-binding methyltransferase superfamily. RNA methyltransferase TrmH family. RlmB subfamily.

The protein resides in the cytoplasm. The enzyme catalyses guanosine(2251) in 23S rRNA + S-adenosyl-L-methionine = 2'-O-methylguanosine(2251) in 23S rRNA + S-adenosyl-L-homocysteine + H(+). Functionally, specifically methylates the ribose of guanosine 2251 in 23S rRNA. The protein is 23S rRNA (guanosine-2'-O-)-methyltransferase RlmB of Vibrio parahaemolyticus serotype O3:K6 (strain RIMD 2210633).